The sequence spans 191 residues: Probable molybdenum cofactor guanylyltransferase (191 aa).

GTP contacts are provided by residues 6-8 (LAG), lysine 18, aspartate 67, and aspartate 92. Aspartate 92 contributes to the Mg(2+) binding site.

The protein belongs to the MobA family. Mg(2+) is required as a cofactor.

It is found in the cytoplasm. It carries out the reaction Mo-molybdopterin + GTP + H(+) = Mo-molybdopterin guanine dinucleotide + diphosphate. Transfers a GMP moiety from GTP to Mo-molybdopterin (Mo-MPT) cofactor (Moco or molybdenum cofactor) to form Mo-molybdopterin guanine dinucleotide (Mo-MGD) cofactor. This is Probable molybdenum cofactor guanylyltransferase from Thermococcus gammatolerans (strain DSM 15229 / JCM 11827 / EJ3).